The chain runs to 556 residues: U-box domain-containing protein 38 (556 aa).

The disordered stretch occupies residues 1-34 (MGKNGRLRWNPFSHRSSSSTSSSSRQQQQEQQPP). Low complexity predominate over residues 13–32 (SHRSSSSTSSSSRQQQQEQQ). In terms of domain architecture, U-box spans 32–108 (QPPVEFLCPI…DTWCDTVGVS (77 aa)). 5 ARM repeats span residues 256–295 (DEAR…NLSL), 297–336 (KKNK…SLSL), 338–378 (DDNK…HLTL), 380–417 (QTNR…NLAC), and 418–468 (CSEG…ALSH).

As to quaternary structure, binds to SD16, SD17, SD18 and SD129.

The enzyme catalyses S-ubiquitinyl-[E2 ubiquitin-conjugating enzyme]-L-cysteine + [acceptor protein]-L-lysine = [E2 ubiquitin-conjugating enzyme]-L-cysteine + N(6)-ubiquitinyl-[acceptor protein]-L-lysine.. It functions in the pathway protein modification; protein ubiquitination. Functionally, functions as an E3 ubiquitin ligase. In Arabidopsis thaliana (Mouse-ear cress), this protein is U-box domain-containing protein 38 (PUB38).